A 344-amino-acid chain; its full sequence is 5,10-methenyltetrahydromethanopterin hydrogenase (344 aa).

It belongs to the HMD family. As to quaternary structure, homotetramer.

It carries out the reaction 5,10-methenyl-5,6,7,8-tetrahydromethanopterin + H2 = 5,10-methylenetetrahydromethanopterin + H(+). It participates in one-carbon metabolism; methanogenesis from CO(2); 5,10-methylene-5,6,7,8-tetrahydromethanopterin from 5,10-methenyl-5,6,7,8-tetrahydromethanopterin (hydrogen route): step 1/1. Activity requires salt; 100 mM sodium or potassium salts of chloride, phosphate or sulfate are equally effective. Inactivated by O(2). In terms of biological role, catalyzes the reversible reduction of methenyl-H(4)MPT(+) to methylene-H(4)MPT. The polypeptide is 5,10-methenyltetrahydromethanopterin hydrogenase (Methanothermobacter marburgensis (strain ATCC BAA-927 / DSM 2133 / JCM 14651 / NBRC 100331 / OCM 82 / Marburg) (Methanobacterium thermoautotrophicum)).